Consider the following 269-residue polypeptide: uncharacterized protein (269 aa).

Residues 52-262 (KNVYEQLVAT…RKILVESINK (211 aa)) are a coiled coil.

This is an uncharacterized protein from Caenorhabditis elegans.